The following is a 633-amino-acid chain: tRNA uridine 5-carboxymethylaminomethyl modification enzyme MnmG (633 aa).

FAD-binding positions include 15–20, Val127, and Ser182; that span reads GAGHAG. Residue 276–290 participates in NAD(+) binding; it reads GPRYCPSIEDKIVRF. Residue Gln373 participates in FAD binding.

The protein belongs to the MnmG family. As to quaternary structure, homodimer. Heterotetramer of two MnmE and two MnmG subunits. FAD is required as a cofactor.

It is found in the cytoplasm. Its function is as follows. NAD-binding protein involved in the addition of a carboxymethylaminomethyl (cmnm) group at the wobble position (U34) of certain tRNAs, forming tRNA-cmnm(5)s(2)U34. The sequence is that of tRNA uridine 5-carboxymethylaminomethyl modification enzyme MnmG from Streptococcus thermophilus (strain ATCC BAA-491 / LMD-9).